The following is a 257-amino-acid chain: 1-(5-phosphoribosyl)-5-[(5-phosphoribosylamino)methylideneamino] imidazole-4-carboxamide isomerase (257 aa).

The Proton acceptor role is filled by Asp-8. Residue Asp-129 is the Proton donor of the active site.

Belongs to the HisA/HisF family.

It is found in the cytoplasm. The enzyme catalyses 1-(5-phospho-beta-D-ribosyl)-5-[(5-phospho-beta-D-ribosylamino)methylideneamino]imidazole-4-carboxamide = 5-[(5-phospho-1-deoxy-D-ribulos-1-ylimino)methylamino]-1-(5-phospho-beta-D-ribosyl)imidazole-4-carboxamide. It participates in amino-acid biosynthesis; L-histidine biosynthesis; L-histidine from 5-phospho-alpha-D-ribose 1-diphosphate: step 4/9. This is 1-(5-phosphoribosyl)-5-[(5-phosphoribosylamino)methylideneamino] imidazole-4-carboxamide isomerase from Gloeothece citriformis (strain PCC 7424) (Cyanothece sp. (strain PCC 7424)).